Reading from the N-terminus, the 247-residue chain is Sugar fermentation stimulation protein homolog (247 aa).

The protein belongs to the SfsA family.

The protein is Sugar fermentation stimulation protein homolog of Oleidesulfovibrio alaskensis (strain ATCC BAA-1058 / DSM 17464 / G20) (Desulfovibrio alaskensis).